Consider the following 296-residue polypeptide: MYLQLLKSLNRLHPRAWDFVQLSRMDRPIGIYLLLWPTLSAVWIAGNGSPTLANVLIFGLGVVLMRAAGCCINDFADRKVDGHVKRTADRPLASGRVRPREALTLFAILVGVSFLLVLCTNSRTVWLSFGAVALAFCYPFMKRYTYYPQVVLGAAYSWGIPMAFTAAGGELPAGAWLLYIANLLWTVGYDTYYAMVDRDDDLKIGVKSTAILFGDADRSIILTLQLLSLGCLLLAGSRFDLGGWFHLGLLGAAACFAWEYWSTRKLDRESCFKAFLHNHWAGMLVFIGVVLDYALR.

8 consecutive transmembrane segments (helical) span residues 28–48 (PIGI…AGNG), 52–72 (LANV…GCCI), 102–122 (ALTL…CTNS), 145–167 (TYYP…FTAA), 174–196 (GAWL…YAMV), 219–239 (SIIL…GSRF), 241–261 (LGGW…WEYW), and 275–295 (FLHN…DYAL).

The protein belongs to the UbiA prenyltransferase family. It depends on Mg(2+) as a cofactor.

It is found in the cell inner membrane. The enzyme catalyses all-trans-octaprenyl diphosphate + 4-hydroxybenzoate = 4-hydroxy-3-(all-trans-octaprenyl)benzoate + diphosphate. Its pathway is cofactor biosynthesis; ubiquinone biosynthesis. Its function is as follows. Catalyzes the prenylation of para-hydroxybenzoate (PHB) with an all-trans polyprenyl group. Mediates the second step in the final reaction sequence of ubiquinone-8 (UQ-8) biosynthesis, which is the condensation of the polyisoprenoid side chain with PHB, generating the first membrane-bound Q intermediate 3-octaprenyl-4-hydroxybenzoate. This is 4-hydroxybenzoate octaprenyltransferase from Pseudomonas putida (strain ATCC 700007 / DSM 6899 / JCM 31910 / BCRC 17059 / LMG 24140 / F1).